Reading from the N-terminus, the 498-residue chain is ATP synthase subunit beta, chloroplastic (498 aa).

172–179 (GGAGVGKT) lines the ATP pocket.

Belongs to the ATPase alpha/beta chains family. As to quaternary structure, F-type ATPases have 2 components, CF(1) - the catalytic core - and CF(0) - the membrane proton channel. CF(1) has five subunits: alpha(3), beta(3), gamma(1), delta(1), epsilon(1). CF(0) has four main subunits: a(1), b(1), b'(1) and c(9-12).

It is found in the plastid. The protein resides in the chloroplast thylakoid membrane. The catalysed reaction is ATP + H2O + 4 H(+)(in) = ADP + phosphate + 5 H(+)(out). Functionally, produces ATP from ADP in the presence of a proton gradient across the membrane. The catalytic sites are hosted primarily by the beta subunits. The polypeptide is ATP synthase subunit beta, chloroplastic (Agapanthus africanus (Lily of the Nile)).